The sequence spans 359 residues: Type-1 angiotensin II receptor (359 aa).

Residues 1–25 lie on the Extracellular side of the membrane; that stretch reads MMLNSSTEDGIKRIQDDCPKAGRHN. Residue N4 is glycosylated (N-linked (GlcNAc...) asparagine). Angiotensin II-binding residues include Q15 and D17. Intrachain disulfides connect C18–C274 and C101–C180. The chain crosses the membrane as a helical span at residues 26-55; the sequence is YIFVMIPTLYSIIFVVGIFGNSLAVIVIYF. At 56–61 the chain is on the cytoplasmic side; that stretch reads YMKLKT. Residues 62–89 form a helical membrane-spanning segment; sequence VASVFLLNLALADLCFLLTLPLWAVYTA. The Extracellular portion of the chain corresponds to 90 to 98; that stretch reads MEYRWPFGN. The chain crosses the membrane as a helical span at residues 99 to 125; the sequence is YLCKIASASVSFNLYASVFLLTCLSID. Over 126–141 the chain is Cytoplasmic; that stretch reads RYLAIVHPMKSRLRRT. A helical membrane pass occupies residues 142–165; sequence MLVAKVTCIIIWLLAGLASLPAII. At 166–190 the chain is on the extracellular side; sequence HRNVFFIENTNITVCAFHYESQNST. An angiotensin II-binding site is contributed by R167. N176 carries N-linked (GlcNAc...) asparagine glycosylation. Angiotensin II contacts are provided by F182, H183, and Y184. N188 carries N-linked (GlcNAc...) asparagine glycosylation. The helical transmembrane segment at 191-216 threads the bilayer; that stretch reads LPIGLGLTKNILGFLFPFLIILTSYT. K199 is an angiotensin II binding site. The Cytoplasmic segment spans residues 217–239; the sequence is LIWKALKKAYEIQKNKPRNDDIF. A helical transmembrane segment spans residues 240 to 268; the sequence is KIIMAIVLFFFFSWVPHQIFTFLDVLIQL. The Extracellular segment spans residues 269-278; sequence GVIHDCRIAD. A helical membrane pass occupies residues 279 to 304; that stretch reads IVDTAMPITICIAYFNNCLNPLFYGF. Residues 305 to 359 lie on the Cytoplasmic side of the membrane; it reads LGKKFKKYFLQLLKYIPPKAKSHSNLSTKMSTLSYRPSDNVSSSSKKPVPCFEVE. Residues 335 to 350 show a composition bias toward polar residues; sequence STLSYRPSDNVSSSSK. The disordered stretch occupies residues 335–359; that stretch reads STLSYRPSDNVSSSSKKPVPCFEVE. C355 carries the S-palmitoyl cysteine lipid modification.

Belongs to the G-protein coupled receptor 1 family. As to quaternary structure, interacts with MAS1. Interacts with ARRB1. Interacts with FLNA (via filamin repeat 21); increases PKA-mediated phosphorylation of FLNA. In terms of processing, C-terminal Ser or Thr residues may be phosphorylated.

It localises to the cell membrane. Its function is as follows. Receptor for angiotensin II, a vasoconstricting peptide, which acts as a key regulator of blood pressure and sodium retention by the kidney. The activated receptor in turn couples to G-alpha proteins G(q) (GNAQ, GNA11, GNA14 or GNA15) and thus activates phospholipase C and increases the cytosolic Ca(2+) concentrations, which in turn triggers cellular responses such as stimulation of protein kinase C. The sequence is that of Type-1 angiotensin II receptor (AGTR1) from Oryctolagus cuniculus (Rabbit).